The primary structure comprises 557 residues: Proline--tRNA ligase (557 aa).

This sequence belongs to the class-II aminoacyl-tRNA synthetase family. ProS type 1 subfamily. In terms of assembly, homodimer.

It localises to the cytoplasm. It catalyses the reaction tRNA(Pro) + L-proline + ATP = L-prolyl-tRNA(Pro) + AMP + diphosphate. Its function is as follows. Catalyzes the attachment of proline to tRNA(Pro) in a two-step reaction: proline is first activated by ATP to form Pro-AMP and then transferred to the acceptor end of tRNA(Pro). As ProRS can inadvertently accommodate and process non-cognate amino acids such as alanine and cysteine, to avoid such errors it has two additional distinct editing activities against alanine. One activity is designated as 'pretransfer' editing and involves the tRNA(Pro)-independent hydrolysis of activated Ala-AMP. The other activity is designated 'posttransfer' editing and involves deacylation of mischarged Ala-tRNA(Pro). The misacylated Cys-tRNA(Pro) is not edited by ProRS. In Baumannia cicadellinicola subsp. Homalodisca coagulata, this protein is Proline--tRNA ligase.